Consider the following 376-residue polypeptide: 1-deoxy-D-xylulose 5-phosphate reductoisomerase (376 aa).

NADPH-binding residues include Thr-12, Gly-13, Ser-14, Ile-15, Arg-39, Gln-40, and Asn-110. Lys-111 provides a ligand contact to 1-deoxy-D-xylulose 5-phosphate. Glu-112 contributes to the NADPH binding site. Asp-136 lines the Mn(2+) pocket. 1-deoxy-D-xylulose 5-phosphate is bound by residues Ser-137, Glu-138, Ser-162, and His-185. Glu-138 contributes to the Mn(2+) binding site. Gly-191 is a binding site for NADPH. 1-deoxy-D-xylulose 5-phosphate-binding residues include Ser-198, Asn-203, Lys-204, and Glu-207. A Mn(2+)-binding site is contributed by Glu-207.

It belongs to the DXR family. Mg(2+) serves as cofactor. The cofactor is Mn(2+).

It catalyses the reaction 2-C-methyl-D-erythritol 4-phosphate + NADP(+) = 1-deoxy-D-xylulose 5-phosphate + NADPH + H(+). It participates in isoprenoid biosynthesis; isopentenyl diphosphate biosynthesis via DXP pathway; isopentenyl diphosphate from 1-deoxy-D-xylulose 5-phosphate: step 1/6. Its function is as follows. Catalyzes the NADPH-dependent rearrangement and reduction of 1-deoxy-D-xylulose-5-phosphate (DXP) to 2-C-methyl-D-erythritol 4-phosphate (MEP). The sequence is that of 1-deoxy-D-xylulose 5-phosphate reductoisomerase from Treponema pallidum (strain Nichols).